The chain runs to 452 residues: Pup--protein ligase (452 aa).

Residue E9 coordinates Mg(2+). Residue R53 coordinates ATP. Y55 serves as a coordination point for Mg(2+). Residue D57 is the Proton acceptor of the active site. E63 provides a ligand contact to Mg(2+). Residues T66 and W419 each contribute to the ATP site.

Belongs to the Pup ligase/Pup deamidase family. Pup-conjugating enzyme subfamily.

It carries out the reaction ATP + [prokaryotic ubiquitin-like protein]-L-glutamate + [protein]-L-lysine = ADP + phosphate + N(6)-([prokaryotic ubiquitin-like protein]-gamma-L-glutamyl)-[protein]-L-lysine.. It participates in protein degradation; proteasomal Pup-dependent pathway. It functions in the pathway protein modification; protein pupylation. Functionally, catalyzes the covalent attachment of the prokaryotic ubiquitin-like protein modifier Pup to the proteasomal substrate proteins, thereby targeting them for proteasomal degradation. This tagging system is termed pupylation. The ligation reaction involves the side-chain carboxylate of the C-terminal glutamate of Pup and the side-chain amino group of a substrate lysine. This is Pup--protein ligase from Mycobacterium ulcerans (strain Agy99).